Reading from the N-terminus, the 87-residue chain is Protein U62 (87 aa).

Belongs to the herpesviridae UL91 family.

This chain is Protein U62 (U62), found in Human herpesvirus 6B (strain Z29) (HHV-6 variant B).